Reading from the N-terminus, the 5381-residue chain is Protein purity of essence (5381 aa).

Disordered regions lie at residues 140-174 (KHPE…PKLE), 339-364 (QQQT…TSKD), 599-621 (SPET…QKSA), 683-709 (RNDS…SSGS), 1162-1212 (SGGD…STET), and 1632-1659 (QAAQ…QSER). Residues 339 to 350 (QQQTAAAASTSQ) show a composition bias toward low complexity. 2 stretches are compositionally biased toward low complexity: residues 690–709 (SPPS…SSGS) and 1167–1176 (SSCTSAASSS). Residues 1632 to 1646 (QAAQPNPSEESSQAC) are compositionally biased toward polar residues. Residues 1647–1658 (DHSEGGEQRQSE) are compositionally biased toward basic and acidic residues. A UBR-type zinc finger spans residues 1815–1884 (KLCTFSQTQK…EDGSCQALSR (70 aa)). Disordered regions lie at residues 1917–1939 (KRSN…KDSI), 2443–2479 (KNTT…KQLT), 2632–2652 (PDDS…TATQ), 3037–3143 (VSAG…DNNE), 3537–3562 (KQQQ…DREK), and 4247–4280 (HHQQ…KEAA). 4 stretches are compositionally biased toward polar residues: residues 1920 to 1930 (NTAPGATQQQH), 2470 to 2479 (SSQQHQKQLT), 2643 to 2652 (SGPTPVTATQ), and 3048 to 3058 (NVATDGSTLRT). The segment covering 3065-3075 (GSGGSESGGSG) has biased composition (gly residues). Residues 3084 to 3104 (ARSSNFGDHPNTTPPRQSCSS) are compositionally biased toward polar residues. The span at 3119–3132 (SGSGGSASVPGGGL) shows a compositional bias: gly residues. The interval 4904–5374 (PSLKYILRFL…SFIEDLLASL (471 aa)) is UBR4 E3 catalytic module. A HemiRING-type zinc finger spans residues 5022–5136 (GLTCFICREG…SSYMQESTQR (115 aa)). Zn(2+)-binding residues include Cys5025, Cys5028, His5074, and Cys5077. A UZI domain is found at 5139–5374 (ISYTSSIHDL…SFIEDLLASL (236 aa)).

It belongs to the UBR4 family.

Functionally, has a role in growth of the perineurial glial layer of the larval peripheral nerve. May have a role in male fertility and eye development or function. May bind calmodulin. This chain is Protein purity of essence, found in Drosophila pseudoobscura pseudoobscura (Fruit fly).